Reading from the N-terminus, the 62-residue chain is Photosystem II reaction center protein Z (62 aa).

2 consecutive transmembrane segments (helical) span residues 8–28 (AVFA…VVFA) and 41–61 (FSGT…NSLI).

The protein belongs to the PsbZ family. In terms of assembly, PSII is composed of 1 copy each of membrane proteins PsbA, PsbB, PsbC, PsbD, PsbE, PsbF, PsbH, PsbI, PsbJ, PsbK, PsbL, PsbM, PsbT, PsbY, PsbZ, Psb30/Ycf12, at least 3 peripheral proteins of the oxygen-evolving complex and a large number of cofactors. It forms dimeric complexes.

The protein resides in the plastid. The protein localises to the chloroplast thylakoid membrane. May control the interaction of photosystem II (PSII) cores with the light-harvesting antenna, regulates electron flow through the 2 photosystem reaction centers. PSII is a light-driven water plastoquinone oxidoreductase, using light energy to abstract electrons from H(2)O, generating a proton gradient subsequently used for ATP formation. This chain is Photosystem II reaction center protein Z, found in Arabidopsis thaliana (Mouse-ear cress).